We begin with the raw amino-acid sequence, 357 residues long: Uroporphyrinogen decarboxylase (357 aa).

Substrate-binding positions include R27–R31, D77, Y154, T209, and H327.

It belongs to the uroporphyrinogen decarboxylase family. As to quaternary structure, homodimer.

Its subcellular location is the cytoplasm. The enzyme catalyses uroporphyrinogen III + 4 H(+) = coproporphyrinogen III + 4 CO2. It participates in porphyrin-containing compound metabolism; protoporphyrin-IX biosynthesis; coproporphyrinogen-III from 5-aminolevulinate: step 4/4. Its function is as follows. Catalyzes the decarboxylation of four acetate groups of uroporphyrinogen-III to yield coproporphyrinogen-III. The chain is Uroporphyrinogen decarboxylase from Nitrosococcus oceani (strain ATCC 19707 / BCRC 17464 / JCM 30415 / NCIMB 11848 / C-107).